Consider the following 513-residue polypeptide: GMP synthase [glutamine-hydrolyzing] (513 aa).

Positions 3–200 (SVLVLDFGSQ…LIDIAGITPD (198 aa)) constitute a Glutamine amidotransferase type-1 domain. Residue Cys80 is the Nucleophile of the active site. Catalysis depends on residues His174 and Glu176. The GMPS ATP-PPase domain maps to 201-388 (WSPKHFIDHQ…LGIAEDILMR (188 aa)). 228-234 (SGGVDSS) lines the ATP pocket.

Homodimer.

The catalysed reaction is XMP + L-glutamine + ATP + H2O = GMP + L-glutamate + AMP + diphosphate + 2 H(+). It functions in the pathway purine metabolism; GMP biosynthesis; GMP from XMP (L-Gln route): step 1/1. In terms of biological role, catalyzes the synthesis of GMP from XMP. In Chlorobium limicola (strain DSM 245 / NBRC 103803 / 6330), this protein is GMP synthase [glutamine-hydrolyzing].